The primary structure comprises 240 residues: CRISPR-associated protein Cas5 3 (240 aa).

It belongs to the CRISPR-associated protein Cas5 family. Subtype I-A/Apern subfamily. In terms of assembly, part of the aCascade ribonucleoprotein complex.

In terms of biological role, CRISPR (clustered regularly interspaced short palindromic repeat) is an adaptive immune system that provides protection against mobile genetic elements (viruses, transposable elements and conjugative plasmids). CRISPR clusters contain spacers, sequences complementary to antecedent mobile elements, and target invading nucleic acids. CRISPR clusters are transcribed and processed into CRISPR RNA (crRNA). The sequence is that of CRISPR-associated protein Cas5 3 (cas5c) from Saccharolobus solfataricus (strain ATCC 35092 / DSM 1617 / JCM 11322 / P2) (Sulfolobus solfataricus).